The sequence spans 55 residues: A-type ATP synthase subunit G (55 aa).

Has multiple subunits, A(3), B(3), C, D, E, F, G, I and K(x); there may be a few other subunits as well.

Its subcellular location is the cell membrane. Its function is as follows. Component of the A-type ATP synthase that produces ATP from ADP in the presence of a proton gradient across the membrane. This chain is A-type ATP synthase subunit G (atpG), found in Methanosarcina mazei (strain ATCC BAA-159 / DSM 3647 / Goe1 / Go1 / JCM 11833 / OCM 88) (Methanosarcina frisia).